We begin with the raw amino-acid sequence, 395 residues long: Elongation factor Tu (395 aa).

The tr-type G domain maps to 6–205 (KPHINVGTIG…NALEKIDLPI (200 aa)). The segment at 15–22 (GHVDHGKT) is G1. A GTP-binding site is contributed by 15-22 (GHVDHGKT). Thr-22 serves as a coordination point for Mg(2+). Residues 59–63 (GITIS) are G2. Residues 80-83 (DCPG) are G3. Residues 80-84 (DCPGH) and 135-138 (NKCD) each bind GTP. Residues 135-138 (NKCD) are G4. Residues 173–175 (SAV) form a G5 region.

Belongs to the TRAFAC class translation factor GTPase superfamily. Classic translation factor GTPase family. EF-Tu/EF-1A subfamily. As to quaternary structure, monomer.

It localises to the cytoplasm. The enzyme catalyses GTP + H2O = GDP + phosphate + H(+). In terms of biological role, GTP hydrolase that promotes the GTP-dependent binding of aminoacyl-tRNA to the A-site of ribosomes during protein biosynthesis. In Ehrlichia ruminantium (strain Gardel), this protein is Elongation factor Tu.